We begin with the raw amino-acid sequence, 539 residues long: Nucleoporin NUP60 (539 aa).

Residues S10, S49, S81, and S89 each carry the phosphoserine modification. Residues 44–80 (DSARVSPRNNVANKQPRNESFNRRISSMPGGYFHSEI) form a disordered region. Positions 91–118 (VVSAVGEARNDIENKEEEYDETHETNIS) form a coiled coil. Phosphoserine is present on residues S162, S171, S214, and S222. Polar residues-rich tracts occupy residues 242 to 252 (TANTSAQSIAS) and 258 to 267 (SGVSKSAPSK). Disordered stretches follow at residues 242 to 267 (TANT…APSK), 305 to 329 (IRKH…TTVK), and 347 to 493 (NATK…GKHI). The segment covering 347–359 (NATKISPSAPSKD) has biased composition (polar residues). 4 positions are modified to phosphoserine: S352, S360, S374, and S382. Polar residues-rich tracts occupy residues 395 to 433 (SAFN…TNLQ) and 448 to 485 (GDST…LSQE). FXF repeat units follow at residues 399 to 401 (FSF) and 427 to 429 (FNF). At T460 the chain carries Phosphothreonine. Residues 469–471 (FVF) form an FXF 3 repeat. A phosphoserine mark is found at S480 and S483. The FXF 4 repeat unit spans residues 509–511 (FDF).

As to quaternary structure, component of the nuclear pore complex (NPC). NPC constitutes the exclusive means of nucleocytoplasmic transport. NPCs allow the passive diffusion of ions and small molecules and the active, nuclear transport receptor-mediated bidirectional transport of macromolecules such as proteins, RNAs, ribonucleoparticles (RNPs), and ribosomal subunits across the nuclear envelope. Due to its 8-fold rotational symmetry, all subunits are present with 8 copies or multiples thereof. Binds to NUP1 and NUP2 forming the nuclear basket and the distal ring. The interaction with NUP2 is GSP1-GTP-dependent. Interacts through its FG repeats with karyopherins, such as KAP123 and KAP95-SRP1 (KAP60). Also interacts with GSP1-GTP and SRM1 (PRP20), where NUP60 reduces SRM1 activity, thus inhibiting GSP1 guanine nucleotide dissociation. In terms of processing, phosphorylated by CDC28.

Its subcellular location is the nucleus. The protein localises to the nuclear pore complex. It localises to the nucleus membrane. Its function is as follows. Functions as a component of the nuclear pore complex (NPC). NPC components, collectively referred to as nucleoporins (NUPs), can play the role of both NPC structural components and of docking or interaction partners for transiently associated nuclear transport factors. Active directional transport is assured by both, a Phe-Gly (FG) repeat affinity gradient for these transport factors across the NPC and a transport cofactor concentration gradient across the nuclear envelope (GSP1 and GSP2 GTPases associated predominantly with GTP in the nucleus, with GDP in the cytoplasm). The sequence is that of Nucleoporin NUP60 (NUP60) from Saccharomyces cerevisiae (strain ATCC 204508 / S288c) (Baker's yeast).